We begin with the raw amino-acid sequence, 61 residues long: Early E3 6.4 kDa protein (61 aa).

The tract at residues 1-25 is disordered; the sequence is MGNAGPLKLHTITKPGTIPYPPHGS.

The chain is Early E3 6.4 kDa protein from Homo sapiens (Human).